The chain runs to 841 residues: Probable outer membrane usher protein EcpC (841 aa).

The first 29 residues, 1–29, serve as a signal peptide directing secretion; the sequence is MPLRRFSPGLKAQFAFGMVFLFVQPDASA.

The protein belongs to the EcpC/MatD family.

Part of the ecpRABCDE operon, which encodes the E.coli common pilus (ECP). ECP is found in both commensal and pathogenic strains and plays a dual role in early-stage biofilm development and host cell recognition. The sequence is that of Probable outer membrane usher protein EcpC (ecpC) from Escherichia coli O18:K1:H7 (strain IHE3034 / ExPEC).